Reading from the N-terminus, the 324-residue chain is GDP-mannose transporter (324 aa).

Over 1 to 13 the chain is Cytoplasmic; it reads MSELKSRIGNSGS. A helical membrane pass occupies residues 14-34; that stretch reads IANSGPVSILCYCASSILMTV. At 35–44 the chain is on the lumenal side; it reads TNKFVVNTDG. A helical transmembrane segment spans residues 45 to 65; that stretch reads FNMFFVMLFAQSLVCTMCLMV. Residues 66-76 are Cytoplasmic-facing; the sequence is LKMFGYAKYRP. Residues 77-97 traverse the membrane as a helical segment; it reads LNLIDVKNWLPISFLLVFMIF. Topologically, residues 98 to 116 are lumenal; that stretch reads TSAKALKYMPVPIYTIFKN. Asn-116 carries an N-linked (GlcNAc...) asparagine glycan. Residues 117–137 form a helical membrane-spanning segment; that stretch reads LTIILIAYGEVLFFGGSVTPM. Glu-138 is a topological domain (cytoplasmic). The helical transmembrane segment at 139–159 threads the bilayer; that stretch reads LSSFILMVLSSVVASLGDQQA. Topologically, residues 160–170 are lumenal; the sequence is AKIAQPLANNS. The N-linked (GlcNAc...) asparagine glycan is linked to Asn-168. Residues 171–191 traverse the membrane as a helical segment; the sequence is ILSPEYYWMFLNCICSASFVL. At 192–204 the chain is on the cytoplasmic side; the sequence is IMRKRIKLTNFKD. Residues 205-225 form a helical membrane-spanning segment; it reads YDTMFYNNALALPILLGFSFL. The Lumenal segment spans residues 226-243; it reads SEDWSSENLAQNFSGESL. Residue Asn-237 is glycosylated (N-linked (GlcNAc...) asparagine). The helical transmembrane segment at 244–264 threads the bilayer; it reads SAMIISGMTSVGISYCSGWCV. The Cytoplasmic portion of the chain corresponds to 265–270; the sequence is RATSST. The chain crosses the membrane as a helical span at residues 271–291; it reads TYSMVGALNKLPIALAGLIFF. Residues 292–295 are Lumenal-facing; sequence DAPR. The chain crosses the membrane as a helical span at residues 296 to 316; it reads NFLSIMSIFIGFASGLSYAVA. Over 317–324 the chain is Cytoplasmic; it reads KQKKVQKN.

This sequence belongs to the TPT transporter family. SLC35D subfamily. In terms of assembly, homooligomer.

Its subcellular location is the golgi apparatus membrane. The protein resides in the cytoplasmic vesicle membrane. It localises to the endoplasmic reticulum membrane. Functionally, involved in the import of GDP-mannose from the cytoplasm into the Golgi lumen. This chain is GDP-mannose transporter (VRG4), found in Candida glabrata (strain ATCC 2001 / BCRC 20586 / JCM 3761 / NBRC 0622 / NRRL Y-65 / CBS 138) (Yeast).